Consider the following 442-residue polypeptide: Limonoid 1-O-acetyltransferse (442 aa).

Active-site proton acceptor residues include histidine 155 and aspartate 381.

It belongs to the plant acyltransferase family. In terms of assembly, monomer.

It carries out the reaction (1S)-1-hydroxy-luvungin A + acetyl-CoA = (1S)-1-acetoxy-luvungin A + CoA. Its pathway is secondary metabolite biosynthesis; terpenoid biosynthesis. Functionally, acetyltransferase involved in the biosynthesis of limonoids triterpene natural products such as limonin, a compound with insecticidal activity responsible for the bitter taste in citrus. Catalyzes the formation of (1S)-1-acetoxy-luvungin A from (1S)-1-hydroxy-luvungin A. The chain is Limonoid 1-O-acetyltransferse from Citrus sinensis (Sweet orange).